Here is a 370-residue protein sequence, read N- to C-terminus: GDSL esterase/lipase At1g09390 (370 aa).

Positions 1-27 are cleaved as a signal peptide; sequence MATLSLHSHSFLLVLLPFILILRQNLA. The active-site Nucleophile is serine 44. N-linked (GlcNAc...) asparagine glycosylation is found at asparagine 90 and asparagine 315. Active-site residues include aspartate 336 and histidine 339.

This sequence belongs to the 'GDSL' lipolytic enzyme family.

It is found in the secreted. The polypeptide is GDSL esterase/lipase At1g09390 (Arabidopsis thaliana (Mouse-ear cress)).